A 478-amino-acid polypeptide reads, in one-letter code: Bifunctional protein HldE (478 aa).

Residues 1 to 318 form a ribokinase region; it reads MKVTLPDFRQ…ENAIRGRADT (318 aa). 195–198 is a binding site for ATP; sequence NLSE. Asp-264 is an active-site residue. The tract at residues 344-478 is cytidylyltransferase; the sequence is MTNGCFDILH…NTIKANASKS (135 aa).

The protein in the N-terminal section; belongs to the carbohydrate kinase PfkB family. This sequence in the C-terminal section; belongs to the cytidylyltransferase family. Homodimer.

It carries out the reaction D-glycero-beta-D-manno-heptose 7-phosphate + ATP = D-glycero-beta-D-manno-heptose 1,7-bisphosphate + ADP + H(+). It catalyses the reaction D-glycero-beta-D-manno-heptose 1-phosphate + ATP + H(+) = ADP-D-glycero-beta-D-manno-heptose + diphosphate. Its pathway is nucleotide-sugar biosynthesis; ADP-L-glycero-beta-D-manno-heptose biosynthesis; ADP-L-glycero-beta-D-manno-heptose from D-glycero-beta-D-manno-heptose 7-phosphate: step 1/4. It functions in the pathway nucleotide-sugar biosynthesis; ADP-L-glycero-beta-D-manno-heptose biosynthesis; ADP-L-glycero-beta-D-manno-heptose from D-glycero-beta-D-manno-heptose 7-phosphate: step 3/4. Functionally, catalyzes the phosphorylation of D-glycero-D-manno-heptose 7-phosphate at the C-1 position to selectively form D-glycero-beta-D-manno-heptose-1,7-bisphosphate. In terms of biological role, catalyzes the ADP transfer from ATP to D-glycero-beta-D-manno-heptose 1-phosphate, yielding ADP-D-glycero-beta-D-manno-heptose. This is Bifunctional protein HldE from Pectobacterium carotovorum subsp. carotovorum (strain PC1).